The sequence spans 201 residues: Small ribosomal subunit protein uS5 (201 aa).

The segment at 1 to 28 is disordered; the sequence is MAGPQRRGSGAGGGERRDRKGRDGGASA. A compositionally biased stretch (basic and acidic residues) spans 14–23; the sequence is GERRDRKGRD. Residues 34 to 97 form the S5 DRBM domain; the sequence is YVERVVAINR…EEAKKNFFKV (64 aa).

The protein belongs to the universal ribosomal protein uS5 family. Part of the 30S ribosomal subunit. Contacts proteins S4 and S8.

In terms of biological role, with S4 and S12 plays an important role in translational accuracy. Functionally, located at the back of the 30S subunit body where it stabilizes the conformation of the head with respect to the body. This chain is Small ribosomal subunit protein uS5, found in Streptomyces griseus subsp. griseus (strain JCM 4626 / CBS 651.72 / NBRC 13350 / KCC S-0626 / ISP 5235).